A 334-amino-acid polypeptide reads, in one-letter code: Kihadalactone A synthase LFS (334 aa).

The Fe2OG dioxygenase domain occupies 181–286 (KTASYSNMFH…RYSTGLFLCP (106 aa)). Positions 208, 210, and 269 each coordinate Fe cation. 2-oxoglutarate is bound at residue Arg-277.

This sequence belongs to the iron/ascorbate-dependent oxidoreductase family. Fe(2+) is required as a cofactor. In terms of tissue distribution, expressed in maturing fruits and in juice vesicles.

The catalysed reaction is (1R,2R,3S,8R,10R,11R,15S,16S)-3-(acetyloxy)-15-(1-hydroxy-4-oxobutan-2-yl)-2,7,7,11,16-pentamethyl-5-oxo-6-oxatetracyclo[9.7.0.0(2,8).0(12,16)]octadec-12-en-10-yl acetate + 2-oxoglutarate + O2 = kihadalactone A + succinate + CO2 + 2 H2O. It participates in secondary metabolite biosynthesis; terpenoid biosynthesis. In terms of biological role, 2-oxoglutarate-Fe(II) type oxidoreductase involved in the biosynthesis of limonoids triterpene natural products such as limonin, a compound with insecticidal activity responsible for the bitter taste in citrus. Catalyzes the formation of kihadalactone A. The protein is Kihadalactone A synthase LFS of Citrus sinensis (Sweet orange).